The following is a 142-amino-acid chain: Endoribonuclease YbeY (142 aa).

Zn(2+) is bound by residues histidine 107, histidine 111, and aspartate 117.

The protein belongs to the endoribonuclease YbeY family. Requires Zn(2+) as cofactor.

The protein resides in the cytoplasm. Single strand-specific metallo-endoribonuclease involved in late-stage 70S ribosome quality control and in maturation of the 3' terminus of the 16S rRNA. This is Endoribonuclease YbeY from Chlorobium phaeobacteroides (strain DSM 266 / SMG 266 / 2430).